A 38-amino-acid chain; its full sequence is Spheniscin-1 (38 aa).

Disulfide bonds link Cys-5/Cys-33, Cys-12/Cys-27, and Cys-17/Cys-34.

In terms of assembly, monomer. In terms of tissue distribution, secreted into the stomach cavity.

It localises to the secreted. Has antifungal activity and antibacterial activity against Gram-positive and Gram-negative bacteria. Involved in the process of food preservation in the stomach during the incubation fast. May also be present during infection. The polypeptide is Spheniscin-1 (Aptenodytes patagonicus (King penguin)).